Here is a 420-residue protein sequence, read N- to C-terminus: Structure-specific endonuclease subunit SLX1 homolog (420 aa).

The GIY-YIG domain occupies 19–106; the sequence is SSDNTYPWQN…QHPLKSRRLR (88 aa). Disordered regions lie at residues 237 to 306 and 311 to 330; these read SVEE…AAVN and DDSADDGTTDGNEDGPDDVA. Over residues 247 to 266 the composition is skewed to low complexity; sequence PSSCSVPPSTGSSAAPTPGA. The span at 279–301 shows a compositional bias: basic and acidic residues; that stretch reads VDPRLDSDDRDDNHQFESPDNHE. Residues 311–327 show a composition bias toward acidic residues; the sequence is DDSADDGTTDGNEDGPD. The SLX1-type zinc-finger motif lies at 348-405; sequence CGHCHQSVYQELCIVCLNATCTYRAHLLCAAQAAVHPLGQSSPSETRLVPLRHSCPRC.

Belongs to the SLX1 family. In terms of assembly, forms a heterodimer with a member of the SLX4 family. It depends on a divalent metal cation as a cofactor.

Its subcellular location is the nucleus. Functionally, catalytic subunit of a heterodimeric structure-specific endonuclease that resolves DNA secondary structures generated during DNA repair and recombination. Has endonuclease activity towards branched DNA substrates, introducing single-strand cuts in duplex DNA close to junctions with ss-DNA. In Monosiga brevicollis (Choanoflagellate), this protein is Structure-specific endonuclease subunit SLX1 homolog.